Consider the following 502-residue polypeptide: Maturase K (502 aa).

The protein belongs to the intron maturase 2 family. MatK subfamily.

The protein localises to the plastid. The protein resides in the chloroplast. Functionally, usually encoded in the trnK tRNA gene intron. Probably assists in splicing its own and other chloroplast group II introns. This Stanleya pinnata (Prince's plume) protein is Maturase K.